Here is a 203-residue protein sequence, read N- to C-terminus: SPbeta prophage-derived uncharacterized lipoprotein YonS (203 aa).

The N-terminal stretch at 1-21 (MKLFKKLGILLLITSLILLAA) is a signal peptide. Cys-22 carries N-palmitoyl cysteine lipidation. A lipid anchor (S-diacylglycerol cysteine) is attached at Cys-22. The span at 27–46 (ESSSSSEDTNNATDTNTSES) shows a compositional bias: low complexity. Residues 27-57 (ESSSSSEDTNNATDTNTSESQDISVNGPEKV) form a disordered region.

Its subcellular location is the cell membrane. The polypeptide is SPbeta prophage-derived uncharacterized lipoprotein YonS (yonS) (Bacillus subtilis (strain 168)).